We begin with the raw amino-acid sequence, 493 residues long: ATP synthase subunit beta, chloroplastic (493 aa).

ATP is bound at residue 170–177 (GGAGVGKT).

This sequence belongs to the ATPase alpha/beta chains family. As to quaternary structure, F-type ATPases have 2 components, CF(1) - the catalytic core - and CF(0) - the membrane proton channel. CF(1) has five subunits: alpha(3), beta(3), gamma(1), delta(1), epsilon(1). CF(0) has four main subunits: a(1), b(1), b'(1) and c(9-12).

It localises to the plastid. It is found in the chloroplast thylakoid membrane. The catalysed reaction is ATP + H2O + 4 H(+)(in) = ADP + phosphate + 5 H(+)(out). In terms of biological role, produces ATP from ADP in the presence of a proton gradient across the membrane. The catalytic sites are hosted primarily by the beta subunits. The chain is ATP synthase subunit beta, chloroplastic from Staurastrum punctulatum (Green alga).